The primary structure comprises 331 residues: MKVYAAPFEKFVNLADARLGTRILSVTDDWFADANRLFQPTPAVWKEGVFDDNGKWMDGWESRRKRFEGYDSAVIRLGVAGTIKGVDIDTSFFTGNFPPSASLEACFLASGEPDENTAWTEVLPSVELQGNSHHYHEINNDQAFSHLRFNIYPDGGVARLRVYGVPHRDWSKVSADEQIDLVAALNGGRSIACSDEHYGSMSNILNPGRGVNMGDGWETARRRTPGNDWVIVALGHKGEVEKVIVDTLHFKGNYPDSCSIQGALVKGGTDSQIETQSLFWRELLPSQKLTMHAEHEFAEQIKAIGPITHIRLNVFPDGGVSRLRVLGKVAR.

Belongs to the allantoicase family.

The enzyme catalyses allantoate + H2O = (S)-ureidoglycolate + urea. Its pathway is nitrogen metabolism; (S)-allantoin degradation; (S)-ureidoglycolate from allantoate (aminidohydrolase route): step 1/1. The sequence is that of Probable allantoicase from Pseudomonas syringae pv. syringae (strain B728a).